The primary structure comprises 471 residues: Ankyrin repeat and death domain-containing protein 1A (471 aa).

ANK repeat units follow at residues 19–48 (VGRV…AVDE), 52–81 (FGMN…KIHC), 85–114 (DGLT…DVAL), 120–149 (LGRT…DHSV), 153–182 (EGNT…DLEE), 186–215 (EGLT…TVNA), 219–248 (KNLS…CTNV), 251–280 (HGAS…DLNA), 284–313 (RQQT…DLNL), and 317–346 (QGKT…FYKW). Residues 379–467 (SVLWRLASRH…DLAELAVASV (89 aa)) form the Death domain.

The protein is Ankyrin repeat and death domain-containing protein 1A (ANKDD1A) of Macaca fascicularis (Crab-eating macaque).